The following is a 294-amino-acid chain: tRNA pseudouridine synthase B (294 aa).

The Nucleophile role is filled by aspartate 39.

This sequence belongs to the pseudouridine synthase TruB family. Type 1 subfamily.

The catalysed reaction is uridine(55) in tRNA = pseudouridine(55) in tRNA. Its function is as follows. Responsible for synthesis of pseudouridine from uracil-55 in the psi GC loop of transfer RNAs. This Streptococcus agalactiae serotype Ia (strain ATCC 27591 / A909 / CDC SS700) protein is tRNA pseudouridine synthase B.